A 334-amino-acid chain; its full sequence is Protein-methionine-sulfoxide reductase catalytic subunit MsrP (334 aa).

Residues 1 to 44 (MKKNQFLKESDVTAESVFFMKRRQVLKALGISAAALSLPHAAHA) constitute a signal peptide (tat-type signal). Residues asparagine 88, 91–92 (YE), cysteine 146, threonine 181, asparagine 233, arginine 238, and 249–251 (GIK) each bind Mo-molybdopterin.

Belongs to the MsrP family. In terms of assembly, heterodimer of a catalytic subunit (MsrP) and a heme-binding subunit (MsrQ). It depends on Mo-molybdopterin as a cofactor. Post-translationally, predicted to be exported by the Tat system. The position of the signal peptide cleavage has not been experimentally proven.

It localises to the periplasm. The catalysed reaction is L-methionyl-[protein] + a quinone + H2O = L-methionyl-(S)-S-oxide-[protein] + a quinol. The enzyme catalyses L-methionyl-[protein] + a quinone + H2O = L-methionyl-(R)-S-oxide-[protein] + a quinol. In terms of biological role, part of the MsrPQ system that repairs oxidized periplasmic proteins containing methionine sulfoxide residues (Met-O), using respiratory chain electrons. Thus protects these proteins from oxidative-stress damage caused by reactive species of oxygen and chlorine generated by the host defense mechanisms. MsrPQ is essential for the maintenance of envelope integrity under bleach stress, rescuing a wide series of structurally unrelated periplasmic proteins from methionine oxidation, including the primary periplasmic chaperone SurA and the lipoprotein Pal. The catalytic subunit MsrP is non-stereospecific, being able to reduce both (R-) and (S-) diastereoisomers of methionine sulfoxide. This Escherichia coli O9:H4 (strain HS) protein is Protein-methionine-sulfoxide reductase catalytic subunit MsrP.